Here is a 953-residue protein sequence, read N- to C-terminus: Mannosylglycoprotein endo-beta-mannosidase (953 aa).

E461 functions as the Proton donor in the catalytic mechanism. Residue E553 is the Nucleophile of the active site.

It belongs to the glycosyl hydrolase 2 family. In terms of assembly, heterotrimer of 31 kDa, 28 kDa and 42 kDa subunits. The mature enzyme is proteotically cleaved into 3 subunits of 31 kDa, 28 kDa and 42 kDa. Ubiquitously expressed.

It catalyses the reaction Hydrolysis of the alpha-D-mannosyl-(1-&gt;6)-beta-D-mannosyl-(1-&gt;4)-N-acetyl-beta-D-glucosaminyl-(1-&gt;4)-N-acetyl-beta-D-glucosaminyl sequence of glycoprotein to alpha-D-mannosyl-(1-&gt;6)-D-mannose and N-acetyl-beta-D-glucosaminyl-(1-&gt;4)-N-acetyl-beta-D-glucosaminyl sequences.. Functionally, glycosidase that specifically hydrolyzes the Man-beta-1,4-GlcNAc linkage in the trimannosyl core structure of N-glycans. Does not hydrolyzes pyridylamino derivatives sugar chains containing Man-alpha-1,3-Man-beta or Xylose-beta-1,2-Man-beta. The sequence is that of Mannosylglycoprotein endo-beta-mannosidase (EBM) from Lilium longiflorum (Trumpet lily).